Here is an 809-residue protein sequence, read N- to C-terminus: Eukaryotic translation initiation factor 3 subunit C (809 aa).

The interval 1-102 is disordered; sequence MSRFFAASYE…DSDESDEASK (102 aa). Acidic residues-rich tracts occupy residues 18 to 30 and 37 to 59; these read SEED…EEEL and SEEE…DSDD. Residues 605-780 enclose the PCI domain; it reads FHEHINLDLI…SVLSIAKGAE (176 aa).

It belongs to the eIF-3 subunit C family. As to quaternary structure, component of the eukaryotic translation initiation factor 3 (eIF-3) complex.

It localises to the cytoplasm. Its function is as follows. Component of the eukaryotic translation initiation factor 3 (eIF-3) complex, which is involved in protein synthesis of a specialized repertoire of mRNAs and, together with other initiation factors, stimulates binding of mRNA and methionyl-tRNAi to the 40S ribosome. The eIF-3 complex specifically targets and initiates translation of a subset of mRNAs involved in cell proliferation. In Vanderwaltozyma polyspora (strain ATCC 22028 / DSM 70294 / BCRC 21397 / CBS 2163 / NBRC 10782 / NRRL Y-8283 / UCD 57-17) (Kluyveromyces polysporus), this protein is Eukaryotic translation initiation factor 3 subunit C.